A 620-amino-acid chain; its full sequence is Glutathione-regulated potassium-efflux system protein KefC (620 aa).

Topologically, residues 1 to 3 (MDS) are periplasmic. A helical membrane pass occupies residues 4–24 (HTLIQALIYLGSAALIVPIAV). R25 is a topological domain (cytoplasmic). Residues 26-46 (LGLGSVLGYLIAGCIIGPWGL) form a helical membrane-spanning segment. At 47–53 (RLVTDAE) the chain is on the periplasmic side. A helical membrane pass occupies residues 54-74 (SILHFAEIGVVLMLFIIGLEL). Topologically, residues 75-89 (DPQRLWKLRAAVFGG) are cytoplasmic. A helical membrane pass occupies residues 90–110 (GALQMVICGGLLGLFCMLLGL). The Periplasmic segment spans residues 111–113 (RWQ). The chain crosses the membrane as a helical span at residues 114–134 (VAELIGMTLALSSTAIAMQAM). Over 135 to 148 (NERNLMVTQMGRSA) the chain is Cytoplasmic. A helical membrane pass occupies residues 149–169 (FAVLLFQDIAAIPLVAMIPLL). The Periplasmic portion of the chain corresponds to 170–177 (AASSASTT). Residues 178 to 198 (MGAFVLSALKVAGALALVVLL) traverse the membrane as a helical segment. Over 199-213 (GRYVTRPALRFVARS) the chain is Cytoplasmic. The chain crosses the membrane as a helical span at residues 214 to 233 (GLREVFSAVALFLVFGFGLL). The Periplasmic segment spans residues 234–236 (LEE). A helical transmembrane segment spans residues 237-254 (VGLSMAMGAFLAGVLLAS). Residues 255-269 (SEYRHALESDIEPFK) lie on the Cytoplasmic side of the membrane. A helical membrane pass occupies residues 270 to 290 (GLLLGLFFIGVGMSIDFGTLL). Over 291–293 (ENP) the chain is Periplasmic. Residues 294-314 (LRIVILLLGFLIIKIAMLWLI) traverse the membrane as a helical segment. Topologically, residues 315–326 (ARPLQVPNKQRR) are cytoplasmic. Residues 327 to 347 (WFAVLLGQGSEFAFVVFGAAQ) traverse the membrane as a helical segment. Residues 348–358 (MANVLEPEWAK) are Periplasmic-facing. A helical transmembrane segment spans residues 359 to 379 (SLTLAVALSMAATPILLVILN). Topologically, residues 380–620 (RLEQSSTEEA…ADEPETKPSS (241 aa)) are cytoplasmic. Positions 399 to 518 (QPRVIIAGFG…AGVEKPERET (120 aa)) constitute an RCK N-terminal domain. A disordered region spans residues 597 to 620 (GWQGTEEGKHTGNMADEPETKPSS).

The protein belongs to the monovalent cation:proton antiporter 2 (CPA2) transporter (TC 2.A.37) family. KefC subfamily. In terms of assembly, homodimer. Interacts with the regulatory subunit KefF.

It is found in the cell inner membrane. Functionally, pore-forming subunit of a potassium efflux system that confers protection against electrophiles. Catalyzes K(+)/H(+) antiport. The sequence is that of Glutathione-regulated potassium-efflux system protein KefC from Escherichia coli O6:H1 (strain CFT073 / ATCC 700928 / UPEC).